We begin with the raw amino-acid sequence, 935 residues long: Bifunctional alpha-galactosidase/sucrose kinase AgaSK (935 aa).

The alpha-galactosidase stretch occupies residues 1 to 720; sequence MAIIYNPNKK…EAYQFAFTEL (720 aa). The Mg(2+) site is built by Glu-176, Glu-277, and Phe-280. Residues 366–367, Arg-443, 476–480, and 518–521 contribute to the substrate site; these read DD, KWDMN, and CSGG. Residue Asp-526 is the Nucleophile of the active site. Asp-540 provides a ligand contact to substrate. Glu-606 acts as the Proton donor/acceptor in catalysis. Residues 721-935 form a sucrose kinase region; that stretch reads KEAGRLYEKV…VGKDGSVYEQ (215 aa). ATP-binding positions include 748-752 and Ala-824; that span reads GGSGS.

This sequence in the N-terminal section; belongs to the glycosyl hydrolase 36 family. In the C-terminal section; belongs to the uridine kinase family. Homotetramer. Mg(2+) serves as cofactor.

It catalyses the reaction Hydrolysis of terminal, non-reducing alpha-D-galactose residues in alpha-D-galactosides, including galactose oligosaccharides, galactomannans and galactolipids.. Its function is as follows. Bifunctional enzyme with alpha-galactosidase and sucrose kinase activities. Produces sucrose-6-phosphate directly from raffinose. Binds ATP. Phosphorylates sucrose specifically on the C6 position of glucose in the presence of ATP. Hydrolyzes melibiose, raffinose, stachyose and synthetic substrate p-nitrophenyl-alpha-D-galactopyranoside with high activity. Low activity against locust bean gum, guar gum and synthetic substrates xylose alpha-D-4-nitrophenol, glucose alpha-D-4-nitrophenol and o-nitrophenyl-alpha-D-galactopyranoside. The polypeptide is Bifunctional alpha-galactosidase/sucrose kinase AgaSK (Mediterraneibacter gnavus (Ruminococcus gnavus)).